We begin with the raw amino-acid sequence, 287 residues long: Nucleotide-binding protein Gbem_0872 (287 aa).

Residue G8–S15 participates in ATP binding. D59 to S62 lines the GTP pocket.

This sequence belongs to the RapZ-like family.

Its function is as follows. Displays ATPase and GTPase activities. In Citrifermentans bemidjiense (strain ATCC BAA-1014 / DSM 16622 / JCM 12645 / Bem) (Geobacter bemidjiensis), this protein is Nucleotide-binding protein Gbem_0872.